Reading from the N-terminus, the 448-residue chain is C4-dicarboxylate transport protein (448 aa).

Transmembrane regions (helical) follow at residues phenylalanine 22–alanine 42, leucine 55–methionine 75, threonine 90–valine 110, glutamate 137–valine 157, glycine 159–glycine 179, leucine 199–isoleucine 219, and tryptophan 232–valine 252. The tract at residues arginine 428–arginine 448 is disordered. The span at leucine 432–alanine 441 shows a compositional bias: pro residues.

Belongs to the dicarboxylate/amino acid:cation symporter (DAACS) (TC 2.A.23) family.

It localises to the cell inner membrane. Its function is as follows. Responsible for the transport of dicarboxylates such as succinate, fumarate, and malate from the periplasm across the membrane. This Xanthomonas campestris pv. campestris (strain 8004) protein is C4-dicarboxylate transport protein.